The following is a 160-amino-acid chain: Transcription antitermination protein NusB (160 aa).

It belongs to the NusB family.

In terms of biological role, involved in transcription antitermination. Required for transcription of ribosomal RNA (rRNA) genes. Binds specifically to the boxA antiterminator sequence of the ribosomal RNA (rrn) operons. In Rhizobium etli (strain CIAT 652), this protein is Transcription antitermination protein NusB.